A 463-amino-acid chain; its full sequence is Ribosome biogenesis protein NSA1 (463 aa).

It belongs to the NSA1 family. Component of the pre-66S ribosomal particle. Interacts with NOP7, RRP1 and RRP5.

It is found in the nucleus. The protein localises to the nucleolus. In terms of biological role, involved in the biogenesis of the 60S ribosomal subunit. The sequence is that of Ribosome biogenesis protein NSA1 (NSA1) from Saccharomyces cerevisiae (strain ATCC 204508 / S288c) (Baker's yeast).